The sequence spans 515 residues: Pescadillo homolog (515 aa).

Positions 270–327 (EVLAALNHTLKIIQTQEEDLEVDEFPIDPNSEDAEAIQAQKEEETKLERLKNLFSECK) form a coiled coil. The region spanning 318 to 411 (RLKNLFSECK…KLLPVEEYFP (94 aa)) is the BRCT domain. A disordered region spans residues 477 to 515 (RLYEKIMHSKKKKRSEVRKLESKRKVHDEEKAKKKLKSS). The span at 484–501 (HSKKKKRSEVRKLESKRK) shows a compositional bias: basic residues.

The protein belongs to the pescadillo family.

It is found in the nucleus. Its subcellular location is the nucleolus. The protein resides in the nucleoplasm. Its function is as follows. Required for maturation of ribosomal RNAs and formation of the large ribosomal subunit. This is Pescadillo homolog from Nematostella vectensis (Starlet sea anemone).